Reading from the N-terminus, the 101-residue chain is NAD(P)H-quinone oxidoreductase subunit 4L, chloroplastic (101 aa).

Transmembrane regions (helical) follow at residues 2-22, 32-52, and 61-81; these read YIENFLLLASALFCIGIYGLL, MCLELCLNAININFIAFSNFI, and VIAIFIMTIAAAEAAIGLALV.

It belongs to the complex I subunit 4L family. In terms of assembly, NDH is composed of at least 16 different subunits, 5 of which are encoded in the nucleus.

It is found in the plastid. The protein localises to the chloroplast thylakoid membrane. It carries out the reaction a plastoquinone + NADH + (n+1) H(+)(in) = a plastoquinol + NAD(+) + n H(+)(out). It catalyses the reaction a plastoquinone + NADPH + (n+1) H(+)(in) = a plastoquinol + NADP(+) + n H(+)(out). In terms of biological role, NDH shuttles electrons from NAD(P)H:plastoquinone, via FMN and iron-sulfur (Fe-S) centers, to quinones in the photosynthetic chain and possibly in a chloroplast respiratory chain. The immediate electron acceptor for the enzyme in this species is believed to be plastoquinone. Couples the redox reaction to proton translocation, and thus conserves the redox energy in a proton gradient. The protein is NAD(P)H-quinone oxidoreductase subunit 4L, chloroplastic of Mesostigma viride (Green alga).